The following is a 272-amino-acid chain: Shikimate dehydrogenase (NADP(+)) (272 aa).

Shikimate is bound by residues 14 to 16 (SKS) and threonine 61. The active-site Proton acceptor is lysine 65. Residues asparagine 86 and aspartate 102 each contribute to the shikimate site. NADP(+) contacts are provided by residues 126–130 (GAGGA), 150–155 (NRTASK), and methionine 214. Tyrosine 216 is a binding site for shikimate. NADP(+) is bound at residue glycine 239.

This sequence belongs to the shikimate dehydrogenase family. As to quaternary structure, homodimer.

It catalyses the reaction shikimate + NADP(+) = 3-dehydroshikimate + NADPH + H(+). Its pathway is metabolic intermediate biosynthesis; chorismate biosynthesis; chorismate from D-erythrose 4-phosphate and phosphoenolpyruvate: step 4/7. Involved in the biosynthesis of the chorismate, which leads to the biosynthesis of aromatic amino acids. Catalyzes the reversible NADPH linked reduction of 3-dehydroshikimate (DHSA) to yield shikimate (SA). This is Shikimate dehydrogenase (NADP(+)) from Pseudoalteromonas atlantica (strain T6c / ATCC BAA-1087).